A 142-amino-acid polypeptide reads, in one-letter code: Putative arsenate reductase (142 aa).

The protein belongs to the low molecular weight phosphotyrosine protein phosphatase family.

Its function is as follows. Reduces arsenate [As(V)] to arsenite [As(III)]. This is Putative arsenate reductase (arsC) from Halobacterium salinarum (strain ATCC 700922 / JCM 11081 / NRC-1) (Halobacterium halobium).